The following is a 128-amino-acid chain: Large ribosomal subunit protein bL12 (128 aa).

It belongs to the bacterial ribosomal protein bL12 family. In terms of assembly, homodimer. Part of the ribosomal stalk of the 50S ribosomal subunit. Forms a multimeric L10(L12)X complex, where L10 forms an elongated spine to which 2 to 4 L12 dimers bind in a sequential fashion. Binds GTP-bound translation factors.

Its function is as follows. Forms part of the ribosomal stalk which helps the ribosome interact with GTP-bound translation factors. Is thus essential for accurate translation. The sequence is that of Large ribosomal subunit protein bL12 from Synechococcus sp. (strain ATCC 27144 / PCC 6301 / SAUG 1402/1) (Anacystis nidulans).